We begin with the raw amino-acid sequence, 122 residues long: Large ribosomal subunit protein uL14 (122 aa).

The protein belongs to the universal ribosomal protein uL14 family. In terms of assembly, part of the 50S ribosomal subunit. Forms a cluster with proteins L3 and L19. In the 70S ribosome, L14 and L19 interact and together make contacts with the 16S rRNA in bridges B5 and B8.

Its function is as follows. Binds to 23S rRNA. Forms part of two intersubunit bridges in the 70S ribosome. The chain is Large ribosomal subunit protein uL14 from Corynebacterium glutamicum (strain R).